The following is a 90-amino-acid chain: Probable Fe(2+)-trafficking protein (90 aa).

Belongs to the Fe(2+)-trafficking protein family. In terms of assembly, monomer.

Could be a mediator in iron transactions between iron acquisition and iron-requiring processes, such as synthesis and/or repair of Fe-S clusters in biosynthetic enzymes. This chain is Probable Fe(2+)-trafficking protein, found in Sodalis glossinidius (strain morsitans).